Reading from the N-terminus, the 246-residue chain is Small ribosomal subunit protein uS2 (246 aa).

The disordered stretch occupies residues 224–246 (AKQGEESAETEAKEAETTETTTA). The segment covering 225–239 (KQGEESAETEAKEAE) has biased composition (basic and acidic residues).

The protein belongs to the universal ribosomal protein uS2 family.

The sequence is that of Small ribosomal subunit protein uS2 from Bacillus licheniformis (strain ATCC 14580 / DSM 13 / JCM 2505 / CCUG 7422 / NBRC 12200 / NCIMB 9375 / NCTC 10341 / NRRL NRS-1264 / Gibson 46).